A 177-amino-acid polypeptide reads, in one-letter code: MTTACPARTSSLMDDLLGLLRIRIKRGVNLAVRDISSSDPYVVVKMGKQKLKTRVINKDVNPEWNEDLTLSVTDSNLTVLLTVYDHDMFSKDDKMGDAEFEIKPYIEALRMQLDGLPSGTIVTTVKPSRRNCLAEESRVTWVDGKLVQDLVLRLRHVECGEVEAQLQWIDLPGSKGL.

The region spanning 4–118 (ACPARTSSLM…LRMQLDGLPS (115 aa)) is the C2 domain. Ca(2+) is bound by residues arginine 33, aspartate 34, aspartate 39, aspartate 85, histidine 86, aspartate 87, and aspartate 93.

This sequence belongs to the plant CAR protein family. Dimers and oligomers. Binds to PYR/PYL/RCAR abscisic acid intracellular receptors in an ABA-independent manner, both at the plasma membrane and in the nucleus. Interacts directly with PYR1, PYL1, PYL4, PYL6 and PYL8. Binds phospholipids in a Ca(2+)-dependent manner. Interacts with YchF1. Ca(2+) serves as cofactor.

The protein resides in the cell membrane. Its subcellular location is the nucleus. The protein localises to the cytoplasm. It is found in the cytosol. Mediates the transient calcium-dependent interaction of PYR/PYL/RCAR abscisic acid (ABA) receptors with the plasma membrane and thus regulates ABA sensitivity. Stimulates the GTPase/ATPase activities of YchF1, and regulates its subcellular localization. Promotes tolerance towards salinity stress by limiting the accumulation of reactive oxygen species (ROS). Promotes resistance to bacterial pathogens (e.g. Xanthomonas oryzae pv. oryzae and P.syringae pv. tomato DC3000). Binds liposomes in the absence of exogenous Ca(2+), but this activity is enhanced in the presence of Ca(2+) and generates membrane curvature. The polypeptide is Protein C2-DOMAIN ABA-RELATED 4 (Arabidopsis thaliana (Mouse-ear cress)).